A 224-amino-acid chain; its full sequence is UPF0758 protein VP0184 (224 aa).

The MPN domain occupies 102–224; it reads ALTSPEQTKL…SVSFAERGWI (123 aa). 3 residues coordinate Zn(2+): histidine 173, histidine 175, and aspartate 186. A JAMM motif motif is present at residues 173–186; that stretch reads HNHPSGVAEPSQAD.

It belongs to the UPF0758 family.

This is UPF0758 protein VP0184 from Vibrio parahaemolyticus serotype O3:K6 (strain RIMD 2210633).